We begin with the raw amino-acid sequence, 504 residues long: Anaerobic nitric oxide reductase transcription regulator NorR (504 aa).

D57 carries the post-translational modification 4-aspartylphosphate. Residues M187–V416 enclose the Sigma-54 factor interaction domain. Residues G215–E222 and A278–E287 each bind ATP. The H-T-H motif DNA-binding region spans W479–K498.

It participates in nitrogen metabolism; nitric oxide reduction. In terms of biological role, required for the expression of anaerobic nitric oxide (NO) reductase, acts as a transcriptional activator for at least the norVW operon. Activation also requires sigma-54. The protein is Anaerobic nitric oxide reductase transcription regulator NorR of Escherichia coli O139:H28 (strain E24377A / ETEC).